A 68-amino-acid polypeptide reads, in one-letter code: Guanine nucleotide-binding protein G(I)/G(S)/G(O) subunit gamma-5B (68 aa).

The G protein gamma domain occupies 3 to 68 (GFSSVAATKK…FRPQKVCSFL (66 aa)). Cys65 is subject to Cysteine methyl ester. A lipid anchor (S-geranylgeranyl cysteine) is attached at Cys65. A propeptide spans 66–68 (SFL) (removed in mature form).

This sequence belongs to the G protein gamma family. As to quaternary structure, g proteins are composed of 3 units; alpha, beta and gamma.

Its subcellular location is the cell membrane. Functionally, guanine nucleotide-binding proteins (G proteins) are involved as a modulator or transducer in various transmembrane signaling systems. The beta and gamma chains are required for the GTPase activity, for replacement of GDP by GTP, and for G protein-effector interaction. This is Guanine nucleotide-binding protein G(I)/G(S)/G(O) subunit gamma-5B from Homo sapiens (Human).